Here is a 981-residue protein sequence, read N- to C-terminus: Mediator of RNA polymerase II transcription subunit 5 (981 aa).

The protein belongs to the Mediator complex subunit 5 family. In terms of assembly, component of the Mediator complex.

It is found in the nucleus. Its function is as follows. Component of the Mediator complex, a coactivator involved in the regulated transcription of nearly all RNA polymerase II-dependent genes. Mediator functions as a bridge to convey information from gene-specific regulatory proteins to the basal RNA polymerase II transcription machinery. Mediator is recruited to promoters by direct interactions with regulatory proteins and serves as a scaffold for the assembly of a functional preinitiation complex with RNA polymerase II and the general transcription factors. This chain is Mediator of RNA polymerase II transcription subunit 5 (NUT1), found in Scheffersomyces stipitis (strain ATCC 58785 / CBS 6054 / NBRC 10063 / NRRL Y-11545) (Yeast).